Here is a 382-residue protein sequence, read N- to C-terminus: Mucosal addressin cell adhesion molecule 1 (382 aa).

The N-terminal stretch at 1–18 is a signal peptide; the sequence is MDFGLALLLAGLLGLLLG. Residues 19-317 are Extracellular-facing; that stretch reads QSLQVKPLQV…TGSSKPAGDQ (299 aa). Ig-like domains follow at residues 23–112 and 113–231; these read VKPL…LLVY and AFPD…TSPE. Cystine bridges form between cysteine 47–cysteine 94, cysteine 51–cysteine 98, and cysteine 134–cysteine 204. Asparagine 83 carries an N-linked (GlcNAc...) asparagine glycan. A disordered region spans residues 223–314; it reads VLHSPTSPEP…VIPTGSSKPA (92 aa). Positions 226-317 are mucin-like; sequence SPTSPEPPDT…TGSSKPAGDQ (92 aa). The 1; truncated repeat unit spans residues 228-231; sequence TSPE. The tract at residues 228 to 271 is 5.5 X 8 AA tandem repeats of [PS]-P-D-T-T-S-[QP]-E; that stretch reads TSPEPPDTTSPESPDTTSPESPDTTSQEPPDTTSPEPPDKTSPE. Tandem repeats lie at residues 232–239, 240–247, 248–255, 256–263, and 264–271. The span at 236-261 shows a compositional bias: low complexity; sequence TSPESPDTTSPESPDTTSQEPPDTTS. The span at 277–288 shows a compositional bias: low complexity; the sequence is GSTHTPRSPGST. Residues 318–338 traverse the membrane as a helical segment; the sequence is LPAALWTSSAVLGLLLLALPT. The Cytoplasmic segment spans residues 339 to 382; the sequence is YHLWKRCRHLAEDDTHPPASLRLLPQVSAWAGLRGTGQVGISPS.

In terms of assembly, homodimer. In terms of processing, the Ser/Thr-rich mucin-like domain may provide possible sites for O-glycosylation. In terms of tissue distribution, highly expressed on high endothelial venules (HEV) and lamina propia venules found in the small intestine, and to a lesser extent in the colon and spleen. Very low levels of expression found in pancreas and brain. Not expressed in the thymus, prostate, ovaries, testis, heart, placenta, lung, liver, skeletal muscle, kidney or peripheral blood leukocytes.

It localises to the membrane. Its function is as follows. Cell adhesion leukocyte receptor expressed by mucosal venules, helps to direct lymphocyte traffic into mucosal tissues including the Peyer patches and the intestinal lamina propria. It can bind both integrin alpha-4/beta-7 and L-selectin, regulating both the passage and retention of leukocytes. Isoform 2, lacking the mucin-like domain, may be specialized in supporting integrin alpha-4/beta-7-dependent adhesion strengthening, independent of L-selectin binding. This chain is Mucosal addressin cell adhesion molecule 1 (MADCAM1), found in Homo sapiens (Human).